Here is a 347-residue protein sequence, read N- to C-terminus: Protein-glutamate methylesterase/protein-glutamine glutaminase 2 (347 aa).

One can recognise a Response regulatory domain in the interval R2–D119. A 4-aspartylphosphate modification is found at D52. A disordered region spans residues A131–A153. Residues P134 to S150 show a composition bias toward pro residues. In terms of domain architecture, CheB-type methylesterase spans P152–V346. Residues S164, H191, and D288 contribute to the active site.

The protein belongs to the CheB family. Phosphorylated by CheA. Phosphorylation of the N-terminal regulatory domain activates the methylesterase activity.

The protein resides in the cytoplasm. The catalysed reaction is [protein]-L-glutamate 5-O-methyl ester + H2O = L-glutamyl-[protein] + methanol + H(+). It catalyses the reaction L-glutaminyl-[protein] + H2O = L-glutamyl-[protein] + NH4(+). Involved in chemotaxis. Part of a chemotaxis signal transduction system that modulates chemotaxis in response to various stimuli. Catalyzes the demethylation of specific methylglutamate residues introduced into the chemoreceptors (methyl-accepting chemotaxis proteins or MCP) by CheR. Also mediates the irreversible deamidation of specific glutamine residues to glutamic acid. The protein is Protein-glutamate methylesterase/protein-glutamine glutaminase 2 of Caulobacter vibrioides (strain ATCC 19089 / CIP 103742 / CB 15) (Caulobacter crescentus).